Reading from the N-terminus, the 1263-residue chain is Condensin complex subunit dpy-26 (1263 aa).

Residues 1–10 (MDVPSSSNVT) show a composition bias toward polar residues. The interval 1-29 (MDVPSSSNVTGRRKRQVLDDDEDDGFRST) is disordered. Residues 691 to 725 (NEQMDETEVEERNEQDVQRELEDIALAADEVAELM) adopt a coiled-coil conformation. Disordered regions lie at residues 1098 to 1118 (YQAA…GTAN) and 1225 to 1263 (FSNL…EMEE). Residues 1106–1118 (NNQPTTSTYGTAN) show a composition bias toward polar residues. Positions 1230 to 1241 (RRPKAVPVRKGR) are enriched in basic residues.

Component of the condensin I complex, which contains the mix-1/SMC2 and smc-4/SMC4 heterodimer, and three non SMC subunits that probably regulate the complex: dpy-26, capg-1 and dpy-28. Within the complex, interacts with dpy-28, mix-1, smc-4 and capg-1. Component of the dosage compensation complex, which consists of the condensin I-like components mix-1/SMC2 and dpy-27/SMC4, and the three non SMC subunits dpy-26, capg-1 and dpy-28. Within the complex, interacts with dpy-27, dpy-28, mix-1 and capg-1. The interaction with dpy-27 is required for dpy-27 protein stability. Interacts with smcl-1. In terms of tissue distribution, expressed in embryos and in somatic and germline tissues in L4 stage larvae (at protein level).

The protein resides in the nucleus. It localises to the chromosome. Its function is as follows. Required for both chromosome condensation and segregation and for X-chromosome dosage compensation depending on its binding partners. Member of the condensin I complex, a complex required for conversion of interphase chromatin into mitotic-like condense chromosomes and for proper chromosome segregation in mitosis and meiosis. As a member of the condensin I complex, further controls the crossover number and distribution in meiosis by restricting double strand break formation, probably by influencing higher-order chromosome structure. Plays a role in robust cytokinesis upon presence of chromatin obstructions. Also a member of the condensin I-like dosage compensation complex that associates specifically with hermaphrodite X chromosomes to reduce their gene transcription during interphase, possibly through chromatin reorganization. As a member of the dosage compensation complex, also binds to regulatory regions of the autosomal her-1 gene, required for male development, possibly contributing to its repression in hermaphrodites. This chain is Condensin complex subunit dpy-26, found in Caenorhabditis elegans.